The following is a 107-amino-acid chain: UPF0145 protein Memar_1285 (107 aa).

Belongs to the UPF0145 family.

The polypeptide is UPF0145 protein Memar_1285 (Methanoculleus marisnigri (strain ATCC 35101 / DSM 1498 / JR1)).